The sequence spans 417 residues: Multifunctional CCA protein (417 aa).

Positions 8 and 11 each coordinate ATP. CTP contacts are provided by Gly8 and Arg11. Mg(2+) is bound by residues Asp21 and Asp23. Residues Arg91, Arg137, and Arg140 each coordinate ATP. Residues Arg91, Arg137, and Arg140 each contribute to the CTP site. Residues 225-326 (SGIHTLMTLQ…LNVLKKTDAF (102 aa)) form the HD domain.

It belongs to the tRNA nucleotidyltransferase/poly(A) polymerase family. Bacterial CCA-adding enzyme type 1 subfamily. As to quaternary structure, monomer. Can also form homodimers and oligomers. Mg(2+) is required as a cofactor. Ni(2+) serves as cofactor.

The catalysed reaction is a tRNA precursor + 2 CTP + ATP = a tRNA with a 3' CCA end + 3 diphosphate. The enzyme catalyses a tRNA with a 3' CCA end + 2 CTP + ATP = a tRNA with a 3' CCACCA end + 3 diphosphate. Catalyzes the addition and repair of the essential 3'-terminal CCA sequence in tRNAs without using a nucleic acid template. Adds these three nucleotides in the order of C, C, and A to the tRNA nucleotide-73, using CTP and ATP as substrates and producing inorganic pyrophosphate. tRNA 3'-terminal CCA addition is required both for tRNA processing and repair. Also involved in tRNA surveillance by mediating tandem CCA addition to generate a CCACCA at the 3' terminus of unstable tRNAs. While stable tRNAs receive only 3'-terminal CCA, unstable tRNAs are marked with CCACCA and rapidly degraded. This chain is Multifunctional CCA protein, found in Neisseria meningitidis serogroup C / serotype 2a (strain ATCC 700532 / DSM 15464 / FAM18).